The following is a 114-amino-acid chain: rRNA-processing protein cgrA (114 aa).

Residues 1–11 are compositionally biased toward polar residues; the sequence is MSSAIPTSSVN. The interval 1–114 is disordered; sequence MSSAIPTSSV…REKRNKLLHS (114 aa). Residues 39–93 are compositionally biased toward basic and acidic residues; it reads YEKRLEARKRQEAVKEHERELREEKEAERKAQIQKIKDRRAAKEEKERYEKMAEK. Positions 40-101 form a coiled coil; it reads EKRLEARKRQ…EKMHRKRVER (62 aa). The segment covering 94-114 has biased composition (basic residues); it reads MHRKRVERLKRREKRNKLLHS.

The protein belongs to the CGR1 family.

The protein resides in the nucleus. The protein localises to the nucleolus. Involved in nucleolar integrity and required for processing of the pre-rRNA for the 60S ribosome subunit. This chain is rRNA-processing protein cgrA (cgrA), found in Aspergillus fumigatus (strain ATCC MYA-4609 / CBS 101355 / FGSC A1100 / Af293) (Neosartorya fumigata).